The primary structure comprises 309 residues: Probable cell division protein kinase ECU11_1290 (309 aa).

Residues tyrosine 4 to isoleucine 288 form the Protein kinase domain. ATP is bound by residues valine 10–valine 18 and lysine 33. Aspartate 124 functions as the Proton acceptor in the catalytic mechanism.

The protein belongs to the protein kinase superfamily. CMGC Ser/Thr protein kinase family. CDC2/CDKX subfamily.

It is found in the nucleus. It carries out the reaction L-seryl-[protein] + ATP = O-phospho-L-seryl-[protein] + ADP + H(+). The catalysed reaction is L-threonyl-[protein] + ATP = O-phospho-L-threonyl-[protein] + ADP + H(+). Its function is as follows. May play a role in the control of the eukaryotic cell cycle. In Encephalitozoon cuniculi (strain GB-M1) (Microsporidian parasite), this protein is Probable cell division protein kinase ECU11_1290.